Consider the following 642-residue polypeptide: Threonine--tRNA ligase (642 aa).

The 61-residue stretch at 1 to 61 (MPVITLPDGS…DTDSELSIIT (61 aa)) folds into the TGS domain. The segment at 243–534 (DHRKIGKQLD…LIEEYAGKFP (292 aa)) is catalytic. Zn(2+)-binding residues include Cys-334, His-385, and His-511.

It belongs to the class-II aminoacyl-tRNA synthetase family. Homodimer. The cofactor is Zn(2+).

Its subcellular location is the cytoplasm. It carries out the reaction tRNA(Thr) + L-threonine + ATP = L-threonyl-tRNA(Thr) + AMP + diphosphate + H(+). In terms of biological role, catalyzes the attachment of threonine to tRNA(Thr) in a two-step reaction: L-threonine is first activated by ATP to form Thr-AMP and then transferred to the acceptor end of tRNA(Thr). Also edits incorrectly charged L-seryl-tRNA(Thr). The sequence is that of Threonine--tRNA ligase from Shewanella woodyi (strain ATCC 51908 / MS32).